The following is a 1287-amino-acid chain: FYVE zinc finger domain protein UPA1 (1287 aa).

The disordered stretch occupies residues 1–298 (MTIPDPANII…SSTSLSAPAE (298 aa)). Positions 86 to 99 (DSSSFGSKPSSSAS) are enriched in low complexity. Over residues 115 to 136 (WATSSTTSHPSKASQSTLSPNA) the composition is skewed to polar residues. The PAM2 motif lies at 128–144 (SQSTLSPNASVFKPSRS). Basic and acidic residues-rich tracts occupy residues 177–187 (RPDHAPLDHEQ) and 201–211 (KVEEQRGDHSI). A compositionally biased stretch (polar residues) spans 212–235 (PHQNGLVSAQAQTASDAVSTSKYT). A PAM2L 1 motif is present at residues 239–253 (ADQEEDQDDFVYPGA). Residues 255–294 (SPSSGQAAVQDEQQAVTDSQTTKSLTKQESDPEASSTSLS) are compositionally biased toward polar residues. 4 ANK repeats span residues 366–395 (NGLVPLHFAAKDGKTDIVRWLITQAGAIVE), 400–429 (EGETALHKAAMAGKLSVASLLLSHGADANA), 433–463 (DGWTALHNACSRGYLDLVRLLVDRGHAQIDV), and 468–497 (GAWTPLMNAASKGHLPVVRHLTAKYHADPF). Disordered regions lie at residues 582–630 (NGGK…VGLP), 643–697 (RVGP…ASAQ), 934–960 (REAAGLDEDEDEDAADDDDDEFIYPNS), and 977–1005 (TSGTLSRPSLSQRQSSAASMLRNSVAPSE). Over residues 674–695 (STPTPESVLQARRGTSSVNGAS) the composition is skewed to polar residues. Residues 938–955 (GLDEDEDEDAADDDDDEF) are compositionally biased toward acidic residues. The PAM2L 2 motif lies at 941-960 (EDEDEDAADDDDDEFIYPNS). Residues 981-995 (LSRPSLSQRQSSAAS) show a composition bias toward low complexity. Residues 1055-1129 (DEEAKDCIGC…VCNGCHAELQ (75 aa)) form an FYVE-type zinc finger. The Zn(2+) site is built by C1061, C1064, C1077, C1080, C1085, C1088, C1121, and C1124. The RING-type; atypical zinc finger occupies 1243–1283 (CSICMEDFVANSTIARLPCLCYFHRGCIDSWFKRGRECPVH).

This sequence belongs to the UPA1 PAM2 domain-binding protein family. As to quaternary structure, part of large ribonucleoprotein complexes (mRNPs) containing RNA-binding proteins RRM4 and PAB1, endosome-binding protein UPA1, core scaffold protein UPA2 and associated factor GRP1. Interacts (via PAM2 motif) with PAB1 (via PABC domain). Interacts (via PAM2L motifs) with RRM4.

The protein localises to the cytoplasm. It is found in the cytoskeleton. It localises to the endosome. Its function is as follows. FYVE zinc finger domain protein that functions in endosomal targeting and transport of mRNAs, as well as associated ribosomes. The endosomal mRNA transport regulates polarity of the infectious hyphae by transporting a broad spectrum of cargo mRNAs from the nucleus to cell poles. Involved in chitinase CTS1 secretion. Dispensable for general endosomal functions but crucial for endosomal recruitment of RRM4. This Mycosarcoma maydis (Corn smut fungus) protein is FYVE zinc finger domain protein UPA1.